We begin with the raw amino-acid sequence, 295 residues long: Acetylglutamate kinase (295 aa).

Substrate-binding positions include 66 to 67 (GG), arginine 88, and asparagine 193.

Belongs to the acetylglutamate kinase family. ArgB subfamily.

The protein resides in the cytoplasm. It carries out the reaction N-acetyl-L-glutamate + ATP = N-acetyl-L-glutamyl 5-phosphate + ADP. Its pathway is amino-acid biosynthesis; L-arginine biosynthesis; N(2)-acetyl-L-ornithine from L-glutamate: step 2/4. In terms of biological role, catalyzes the ATP-dependent phosphorylation of N-acetyl-L-glutamate. The sequence is that of Acetylglutamate kinase from Afipia carboxidovorans (strain ATCC 49405 / DSM 1227 / KCTC 32145 / OM5) (Oligotropha carboxidovorans).